We begin with the raw amino-acid sequence, 397 residues long: Elongation factor Tu (397 aa).

In terms of domain architecture, tr-type G spans Lys-10–Val-207. The G1 stretch occupies residues Gly-19 to Thr-26. GTP is bound at residue Gly-19–Thr-26. Thr-26 contributes to the Mg(2+) binding site. Residues Gly-63–Asn-67 are G2. Residues Asp-84–Gly-87 form a G3 region. Residues Asp-84–His-88 and Asn-139–Asp-142 contribute to the GTP site. Residues Asn-139–Asp-142 form a G4 region. Residues Ser-177–Leu-179 are G5.

Belongs to the TRAFAC class translation factor GTPase superfamily. Classic translation factor GTPase family. EF-Tu/EF-1A subfamily. As to quaternary structure, monomer.

The protein localises to the cytoplasm. The catalysed reaction is GTP + H2O = GDP + phosphate + H(+). In terms of biological role, GTP hydrolase that promotes the GTP-dependent binding of aminoacyl-tRNA to the A-site of ribosomes during protein biosynthesis. The protein is Elongation factor Tu of Clavibacter michiganensis subsp. michiganensis (strain NCPPB 382).